We begin with the raw amino-acid sequence, 446 residues long: MKRAFLSALSVGLAALFLTGPAQAQGNPGPLRIEITEGVIEPLPIAVPPFLAETPAASQFARDIAQVVADDLEGSGLFRAIPENAFISPITSFDSPVQYADWKAINAQALVTGSVSVASDGRLVVKFRLFDVFSDAPLGKGLQFVASQSSWRRMGHKVADAVYSRITGEGGYFDSRVVFVSETGPKNARQKRLAIMDYDGANVQFLTDSSAIVLAPRFSPTGDRVLYTSYATGRPQITLLDVNSVRSQGLGSAQGGEMSFAPRFSPDGRSVVFSLTNGGNSDIYRRDLSSGAQTRLTATPAIETAPSFSPDGRQIVFESDRSGSQQLYVMSATGGEARRISFGPGRYGTPVWSPRGDLIAFTKQNQGRFHIGVMRTDGSEERLLTSSFLDESPTWSPNGRVIMFTRETSGAGGAPSLYSVDISGRNLRRVPTPGAASDPAWSPLLP.

Residues 1–24 form the signal peptide; it reads MKRAFLSALSVGLAALFLTGPAQA.

Belongs to the TolB family. The Tol-Pal system is composed of five core proteins: the inner membrane proteins TolA, TolQ and TolR, the periplasmic protein TolB and the outer membrane protein Pal. They form a network linking the inner and outer membranes and the peptidoglycan layer.

The protein localises to the periplasm. In terms of biological role, part of the Tol-Pal system, which plays a role in outer membrane invagination during cell division and is important for maintaining outer membrane integrity. This chain is Tol-Pal system protein TolB, found in Dinoroseobacter shibae (strain DSM 16493 / NCIMB 14021 / DFL 12).